The primary structure comprises 113 residues: MKQLGDDAEALAERYLIKQGLVVIARNYRCRFGEIDLVMKQGATIVFVEVRMRSHATFGGAAASIHAAKRQKLILTAEHFLQRHGSAPCRFDAILLSKRDADGIEWIQDAFSA.

This sequence belongs to the UPF0102 family.

The chain is UPF0102 protein Mfla_2283 from Methylobacillus flagellatus (strain ATCC 51484 / DSM 6875 / VKM B-1610 / KT).